A 521-amino-acid polypeptide reads, in one-letter code: (+)-kolavenyl diphosphate synthase (521 aa).

Residues Asp311 and Asp313 each coordinate Mg(2+). Positions Asp311–Asp314 match the DXDD motif motif.

Belongs to the terpene synthase family. It depends on Mg(2+) as a cofactor.

It catalyses the reaction (2E,6E,10E)-geranylgeranyl diphosphate = (+)-kolavenyl diphosphate. Functionally, involved in the biosynthesis of (+)-O-methylkolavelool. Catalyzes the conversion of geranylgeranyl diphosphate into (+)-kolavenyl diphosphate. The sequence is that of (+)-kolavenyl diphosphate synthase from Herpetosiphon aurantiacus (strain ATCC 23779 / DSM 785 / 114-95).